We begin with the raw amino-acid sequence, 351 residues long: Polyribonucleotide 5'-hydroxyl-kinase TK1956 (351 aa).

An ATP-binding site is contributed by 34 to 41; sequence GGVDSGKS.

A divalent metal cation is required as a cofactor.

It carries out the reaction a 5'-end dephospho-2'-deoxyribonucleoside-DNA + ATP = a 5'-end 5'-phospho-2'-deoxyribonucleoside-DNA + ADP + H(+). The enzyme catalyses a 5'-end dephospho-ribonucleoside-RNA + ATP = a 5'-end 5'-phospho-ribonucleoside-RNA + ADP + H(+). In terms of biological role, polynucleotide kinase that can phosphorylate the 5'-hydroxyl groups of both single-stranded RNA (ssRNA) and single-stranded DNA (ssDNA). Exhibits a strong preference for ssRNA. In Thermococcus kodakarensis (strain ATCC BAA-918 / JCM 12380 / KOD1) (Pyrococcus kodakaraensis (strain KOD1)), this protein is Polyribonucleotide 5'-hydroxyl-kinase TK1956.